We begin with the raw amino-acid sequence, 154 residues long: Myoglobin (154 aa).

Residues glycine 2–lysine 148 form the Globin domain. Position 4 is a phosphoserine (serine 4). Histidine 65 contacts nitrite. An O2-binding site is contributed by histidine 65. Position 68 is a phosphothreonine (threonine 68). Residue histidine 94 participates in heme b binding.

It belongs to the globin family. As to quaternary structure, monomeric.

The protein resides in the cytoplasm. It localises to the sarcoplasm. The enzyme catalyses Fe(III)-heme b-[protein] + nitric oxide + H2O = Fe(II)-heme b-[protein] + nitrite + 2 H(+). The catalysed reaction is H2O2 + AH2 = A + 2 H2O. Monomeric heme protein which primary function is to store oxygen and facilitate its diffusion within muscle tissues. Reversibly binds oxygen through a pentacoordinated heme iron and enables its timely and efficient release as needed during periods of heightened demand. Depending on the oxidative conditions of tissues and cells, and in addition to its ability to bind oxygen, it also has a nitrite reductase activity whereby it regulates the production of bioactive nitric oxide. Under stress conditions, like hypoxia and anoxia, it also protects cells against reactive oxygen species thanks to its pseudoperoxidase activity. The polypeptide is Myoglobin (MB) (Macaca fascicularis (Crab-eating macaque)).